Reading from the N-terminus, the 520-residue chain is 2-isopropylmalate synthase (520 aa).

In terms of domain architecture, Pyruvate carboxyltransferase spans 5–268; it reads VYIFDTTLRD…YTDVNTKEIY (264 aa). Mn(2+) is bound by residues Asp-14, His-202, His-204, and Asn-238. A regulatory domain region spans residues 394–520; it reads KVLHFQVQSG…RQEIREEGTV (127 aa).

This sequence belongs to the alpha-IPM synthase/homocitrate synthase family. LeuA type 1 subfamily. Homodimer. Mn(2+) serves as cofactor.

It is found in the cytoplasm. It carries out the reaction 3-methyl-2-oxobutanoate + acetyl-CoA + H2O = (2S)-2-isopropylmalate + CoA + H(+). It functions in the pathway amino-acid biosynthesis; L-leucine biosynthesis; L-leucine from 3-methyl-2-oxobutanoate: step 1/4. Functionally, catalyzes the condensation of the acetyl group of acetyl-CoA with 3-methyl-2-oxobutanoate (2-ketoisovalerate) to form 3-carboxy-3-hydroxy-4-methylpentanoate (2-isopropylmalate). This chain is 2-isopropylmalate synthase, found in Aquifex aeolicus (strain VF5).